An 80-amino-acid polypeptide reads, in one-letter code: Serine palmitoyltransferase small subunit A-B (80 aa).

The Cytoplasmic portion of the chain corresponds to 1 to 21; sequence MKVSCEDVNGPRSSLGRAWNH. The helical transmembrane segment at 22-38 threads the bilayer; that stretch reads VSWLYYQYLLVTALYML. Topologically, residues 39–43 are lumenal; that stretch reads EPWER. The chain crosses the membrane as a helical span at residues 44–66; sequence TVFNSMLVSIVGMALYTGYIFMP. The Cytoplasmic segment spans residues 67 to 80; it reads QHILAILHYFEIVQ.

It belongs to the SPTSS family. SPTSSA subfamily. As to quaternary structure, component of the serine palmitoyltransferase (SPT) complex, which is composed of SPTLC1, SPTLC2 or SPTLC3 and SPTSSA or SPTSSB. The heterodimer consisting of SPTLC1 and SPTLC2/SPTLC3 forms the catalytic core of the enzyme, while SPTSSA or SPTSSB subunits determine substrate specificity. SPT also interacts with ORMDL proteins, especially ORMDL3, which negatively regulate SPT activity in the presence of ceramides.

It is found in the endoplasmic reticulum membrane. It functions in the pathway lipid metabolism; sphingolipid metabolism. Its function is as follows. Component of the serine palmitoyltransferase multisubunit enzyme (SPT) that catalyzes the initial and rate-limiting step in sphingolipid biosynthesis by condensing L-serine and activated acyl-CoA (most commonly palmitoyl-CoA) to form long-chain bases. The SPT complex is composed of SPTLC1, SPTLC2 or SPTLC3 and SPTSSA or SPTSSB. Within this complex, the heterodimer consisting of SPTLC1 and SPTLC2/SPTLC3 forms the catalytic core. Within the SPT complex, SPTSSA stimulates the catalytic activity and plays a role in substrate specificity, which depends upon the overall complex composition. The SPTLC1-SPTLC2-SPTSSA complex shows a strong preference for C16-CoA substrate, while the SPTLC1-SPTLC3-SPTSSA isozyme uses both C14-CoA and C16-CoA as substrates, with a slight preference for C14-CoA. Independently of its action as a SPT component, may be involved in MBOAT7 localization to mitochondria-associated membranes, a membrane bridge between the endoplasmic reticulum and mitochondria, may hence affect MBOAT7-catalyzed incorporation of arachidonic acid into phosphatidylinositol. The protein is Serine palmitoyltransferase small subunit A-B (sptssa-b) of Xenopus laevis (African clawed frog).